The following is a 153-amino-acid chain: Aspartate carbamoyltransferase regulatory chain (153 aa).

Positions 109, 114, 138, and 141 each coordinate Zn(2+).

This sequence belongs to the PyrI family. In terms of assembly, contains catalytic and regulatory chains. It depends on Zn(2+) as a cofactor.

Its function is as follows. Involved in allosteric regulation of aspartate carbamoyltransferase. The chain is Aspartate carbamoyltransferase regulatory chain from Vibrio parahaemolyticus serotype O3:K6 (strain RIMD 2210633).